The sequence spans 693 residues: Polyribonucleotide nucleotidyltransferase (693 aa).

Residues Asp489 and Asp495 each contribute to the Mg(2+) site. The KH domain occupies 556 to 615 (PQIHVMNINPAKIKDVVGRGGATVKGIVEKTGAQIDTSDSGEVKVFAKDKKSMDMAVAMI). The S1 motif domain maps to 625–693 (GQVYKGKIVK…GRVKLSLVAR (69 aa)).

This sequence belongs to the polyribonucleotide nucleotidyltransferase family. In terms of assembly, component of the RNA degradosome, which is a multiprotein complex involved in RNA processing and mRNA degradation. Requires Mg(2+) as cofactor.

It is found in the cytoplasm. It catalyses the reaction RNA(n+1) + phosphate = RNA(n) + a ribonucleoside 5'-diphosphate. Involved in mRNA degradation. Catalyzes the phosphorolysis of single-stranded polyribonucleotides processively in the 3'- to 5'-direction. The chain is Polyribonucleotide nucleotidyltransferase from Francisella tularensis subsp. mediasiatica (strain FSC147).